The sequence spans 199 residues: Photosystem I reaction center subunit XI (199 aa).

The next 2 membrane-spanning stretches (helical) occupy residues 108–128 and 165–185; these read LTAGLLAAIGAVHILTALLVL and FWLGGCGGSVFAWLLVGTLHL.

Belongs to the PsaL family.

It localises to the cellular thylakoid membrane. In Prochlorococcus marinus (strain AS9601), this protein is Photosystem I reaction center subunit XI.